The chain runs to 507 residues: Myocyte-specific enhancer factor 2A (507 aa).

In terms of domain architecture, MADS-box spans 3–57 (RKKIQITRIMDERNRQVTFTKRKFGLMKKAYELSVLCDCEIALIIFNSSNKLFQY). Residues 58–86 (ASTDMDKVLLKYTEYNEPHESGTNSDIVE) constitute a DNA-binding region (mef2-type). Ser59 is modified (phosphoserine; by CK2). Phosphoserine occurs at positions 98 and 235. The interval 175 to 269 (ADSSMLSPPQ…GGGNLGMNSR (95 aa)) is disordered. The span at 209–245 (LSTSDLTVPNGAGSSPVGNGFVNSRASPNLVGTTGAN) shows a compositional bias: polar residues. Residue Lys249 is modified to N6-acetyllysine. Residue Ser255 is modified to Phosphoserine. The segment at 266 to 283 (MNSRKPDLRVVIPPSSKG) is required for interaction with MAPKs. The interval 289-296 (SEEEELEL) is beta domain. 2 positions are modified to phosphothreonine; by MAPK7 and MAPK14: Thr312 and Thr319. Phosphoserine; by MAPK7 is present on Ser355. The span at 390 to 402 (SNLSINTNQNINI) shows a compositional bias: polar residues. The disordered stretch occupies residues 390–507 (SNLSINTNQN…KRMRMDAWVT (118 aa)). Position 403 is an N6-acetyllysine; alternate (Lys403). Residue Lys403 forms a Glycyl lysine isopeptide (Lys-Gly) (interchain with G-Cter in SUMO); alternate linkage. Phosphoserine; by CDK5 is present on Ser408. Thr415 bears the Phosphothreonine mark. The segment covering 423–443 (QPPPPSQAPQPQPPQPQPQPQ) has biased composition (pro residues). At Ser453 the chain carries Phosphoserine. The segment covering 453 to 466 (SPVDSLSSSSSSYD) has biased composition (low complexity). Composition is skewed to basic and acidic residues over residues 467–477 (GSDREDPRGDF) and 488–507 (NTEDRESPSVKRMRMDAWVT).

Belongs to the MEF2 family. As to quaternary structure, binds DNA as a homo- or heterodimer. Dimerizes with MEF2D. Interacts with HDAC7. Interacts with PIAS1; the interaction enhances sumoylation. Interacts with HDAC4, HDAC9 and SLC2A4RG. Interacts (via the N-terminal) with MAPK7; the interaction results in the phosphorylation and transcriptional activity of MEF2A. Constitutive phosphorylation on Ser-408 promotes Lys-403 sumoylation thus preventing acetylation at this site. Dephosphorylation on Ser-408 by PPP3CA upon neuron depolarization promotes a switch from sumoylation to acetylation on residue Lys-403 leading to inhibition of dendrite claw differentiation. Phosphorylation on Thr-312 and Thr-319 are the main sites involved in p38 MAPK signaling and activate transcription. Phosphorylated on these sites by MAPK14/p38alpha and MAPK11/p38beta, but not by MAPK13/p38delta nor by MAPK12/p38gamma. Phosphorylation on Ser-408 by CDK5 induced by neurotoxicity inhibits MEF2A transcriptional activation leading to apoptosis of cortical neurons. Phosphorylation on Thr-312, Thr-319 and Ser-355 can be induced by EGF. Post-translationally, sumoylation on Lys-403 is enhanced by PIAS1 and represses transcriptional activity. Phosphorylation on Ser-408 is required for sumoylation. Has no effect on nuclear location nor on DNA binding. Sumoylated with SUMO1 and, to a lesser extent with SUMO2 and SUMO3. PIASx facilitates sumoylation in postsynaptic dendrites in the cerebellar cortex and promotes their morphogenesis. In terms of processing, acetylation on Lys-403 activates transcriptional activity. Acetylated by p300 on several sites in diffentiating myocytes. Acetylation on Lys-4 increases DNA binding and transactivation. Hyperacetylation by p300 leads to enhanced cardiac myocyte growth and heart failure. Proteolytically cleaved on several sites by caspase 3 and caspase 7 following neurotoxicity. Preferentially cleaves the CDK5-mediated hyperphosphorylated form which leads to cortical neuron apoptosis and transcriptional inactivation.

It is found in the nucleus. In terms of biological role, transcriptional activator which binds specifically to the MEF2 element, 5'-YTA[AT](4)TAR-3', found in numerous muscle-specific genes. Also involved in the activation of numerous growth factor- and stress-induced genes. Mediates cellular functions not only in skeletal and cardiac muscle development, but also in neuronal differentiation and survival. Plays diverse roles in the control of cell growth, survival and apoptosis via p38 MAPK signaling in muscle-specific and/or growth factor-related transcription. In cerebellar granule neurons, phosphorylated and sumoylated MEF2A represses transcription of NUR77 promoting synaptic differentiation. Associates with chromatin to the ZNF16 promoter. The chain is Myocyte-specific enhancer factor 2A (MEF2A) from Sus scrofa (Pig).